The chain runs to 149 residues: DnaJ homolog subfamily C member 24 (149 aa).

Positions 11–82 (DWYSILGADP…ETKREYDLQR (72 aa)) constitute a J domain. The 56-residue stretch at 93 to 148 (VDAQVYLEEMSWNEGDHSFYLSCRCGGKYSVSKDEAEEVSLISCDTCSLIIELLHY) folds into the DPH-type MB domain. Zn(2+)-binding residues include Cys-115, Cys-117, Cys-136, and Cys-139.

It belongs to the DPH4 family. Monomer and homooligomer. Iron binding promotes oligomerization.

Its subcellular location is the cytoplasm. It localises to the cytoskeleton. It participates in protein modification; peptidyl-diphthamide biosynthesis. In terms of biological role, stimulates the ATPase activity of several Hsp70-type chaperones. This ability is enhanced by iron-binding. The iron-bound form is redox-active and can function as electron carrier. Plays a role in the diphthamide biosynthesis, a post-translational modification of histidine which occurs in translation elongation factor 2 (EEF2) which can be ADP-ribosylated by diphtheria toxin and by Pseudomonas exotoxin A (Eta). The sequence is that of DnaJ homolog subfamily C member 24 from Homo sapiens (Human).